A 333-amino-acid polypeptide reads, in one-letter code: Homeobox protein engrailed-1 (333 aa).

The segment covering 1–14 (MEEPPEGHGHHRDA) has biased composition (basic and acidic residues). Disordered stretches follow at residues 1–184 (MEEP…AAKY) and 226–247 (RPSS…DKRP). A compositionally biased stretch (gly residues) spans 20–31 (ANGGGGGGGGSD). Over residues 38-66 (SPSPAPASPAAPCPLPLPRRRPPPPPPPR) the composition is skewed to pro residues. Residues 94–104 (TGAGGGGGGGG) are compositionally biased toward gly residues. The span at 144-173 (DGSAPAGTAAKANPGTAAGAAGAAGAAKAQ) shows a compositional bias: low complexity. The homeobox DNA-binding region spans 244–303 (DKRPRTAFTAEQLQRLKAEFQANRYITEQRRQSLAQELSLNESRVKIWFQNKRAKIKKAT).

It belongs to the engrailed homeobox family.

It is found in the nucleus. Its function is as follows. Required for proper formation of the apical ectodermal ridge and correct dorsal-ventral patterning in the limb. The chain is Homeobox protein engrailed-1 (EN1) from Gallus gallus (Chicken).